A 60-amino-acid polypeptide reads, in one-letter code: Large ribosomal subunit protein bL32 (60 aa).

The segment at 1 to 21 (MAVPARHTSKAKKNKRRTHYK) is disordered. Positions 7–20 (HTSKAKKNKRRTHY) are enriched in basic residues.

This sequence belongs to the bacterial ribosomal protein bL32 family.

In Streptococcus uberis (strain ATCC BAA-854 / 0140J), this protein is Large ribosomal subunit protein bL32.